Reading from the N-terminus, the 286-residue chain is 2-hydroxy-6-oxo-6-phenylhexa-2,4-dienoate hydrolase (286 aa).

Substrate-binding positions include 42 to 43 (GG), N51, N111, S180, and R190. Residue H265 is the Proton acceptor of the active site. W266 lines the substrate pocket.

Belongs to the AB hydrolase superfamily. BphD family. As to quaternary structure, homodimer.

It carries out the reaction 2,6-dioxo-6-phenylhexa-3-enoate + H2O = 2-oxopent-4-enoate + benzoate + H(+). It participates in xenobiotic degradation; biphenyl degradation; 2-hydroxy-2,4-pentadienoate and benzoate from biphenyl: step 4/4. Functionally, catalyzes an unusual C-C bond hydrolysis of 2-hydroxy-6-oxo-6-phenylhexa-2,4-dienoic acid (HOPDA) to produce benzoic acid and 2-hydroxy-2,4-pentadienoic acid (HPD). The protein is 2-hydroxy-6-oxo-6-phenylhexa-2,4-dienoate hydrolase of Polaromonas naphthalenivorans (strain CJ2).